A 358-amino-acid polypeptide reads, in one-letter code: MKITLKKLLILAIVPFLYACSSDRANYDDVFAKDTHGLDLLTGQFSQNIDQIWGVNELLVASRKDYVKYNDSYYTRSHISFDEGMITIETLADVNRLHSAIVHTLLMGSDAKGIDLFASGDTPISSRPFLVGQVVNNFGQSITNVNVANNFATYLIQNKLQQRRLNNGRTVQFVSIQMIANHVNIRARKYLPFVRKASRQYGIDESLILGIMQTESSFNPYAISYANAIGLMQVVPHSAGRDIFKMKGRSGQPSKSYLFDPAKNVDAGTSYLWLLRNEYLAGIQNPTSMRYAMISAYNSGAGAVLRVFSDDPDEAIYIINRMQPEQVYRILTTGHPSAQARNYLVKVDKAQRSYRRVR.

Positions 1–19 (MKITLKKLLILAIVPFLYA) are cleaved as a signal peptide. The N-palmitoyl cysteine moiety is linked to residue Cys-20. Cys-20 carries S-diacylglycerol cysteine lipidation.

It belongs to the transglycosylase Slt family.

The protein resides in the cell outer membrane. It carries out the reaction Exolytic cleavage of the (1-&gt;4)-beta-glycosidic linkage between N-acetylmuramic acid (MurNAc) and N-acetylglucosamine (GlcNAc) residues in peptidoglycan, from either the reducing or the non-reducing ends of the peptidoglycan chains, with concomitant formation of a 1,6-anhydrobond in the MurNAc residue.. Functionally, murein-degrading enzyme. May play a role in recycling of muropeptides during cell elongation and/or cell division. This chain is Membrane-bound lytic murein transglycosylase C, found in Actinobacillus succinogenes (strain ATCC 55618 / DSM 22257 / CCUG 43843 / 130Z).